The following is a 197-amino-acid chain: MGSVRETQLRWAILGFLLLQAASETPSQFSTEAMTLSSSTVADHLPSSPGPTWSQSQKHTSGLSADVPSSGRSSDSMSGDTSHNVTSTSPNMSFRTTADSTVPPSPTSETVLTVAAFGVISFIAILVVVVIVLVSVVSLRFKCRKNKESEDPQKPGSSGLSESGSTANGEKESITLISMKNINMNNSKGCPSAEKVL.

An N-terminal signal peptide occupies residues 1–23 (MGSVRETQLRWAILGFLLLQAAS). Residues 24–113 (ETPSQFSTEA…PSPTSETVLT (90 aa)) are Extracellular-facing. The tract at residues 40–107 (TVADHLPSSP…ADSTVPPSPT (68 aa)) is disordered. Residues 50-63 (GPTWSQSQKHTSGL) show a composition bias toward polar residues. Residues 64–82 (SADVPSSGRSSDSMSGDTS) show a composition bias toward low complexity. Residues 83–107 (HNVTSTSPNMSFRTTADSTVPPSPT) show a composition bias toward polar residues. A helical transmembrane segment spans residues 114 to 134 (VAAFGVISFIAILVVVVIVLV). The Cytoplasmic portion of the chain corresponds to 135–197 (SVVSLRFKCR…KGCPSAEKVL (63 aa)). 2 disordered regions span residues 146–172 (NKES…GEKE) and 178–197 (SMKN…EKVL). Composition is skewed to polar residues over residues 155–168 (PGSS…STAN) and 178–189 (SMKNINMNNSKG). Residue S187 is modified to Phosphoserine.

It belongs to the ECSCR family. Interacts with FLNA. Interacts with the 20S proteasome subunit PSMA7. Post-translationally, may be heavily O-glycosylated.

Its subcellular location is the cell membrane. The protein resides in the cytoplasm. Regulates endothelial chemotaxis and tube formation. Has a role in angiogenesis and apoptosis via modulation of the actin cytoskeleton and facilitation of proteasomal degradation of the apoptosis inhibitors BIRC3/IAP1 and BIRC2/IAP2. In Bos taurus (Bovine), this protein is Endothelial cell-specific chemotaxis regulator (ECSCR).